A 475-amino-acid polypeptide reads, in one-letter code: UDP-N-acetylmuramoylalanine--D-glutamate ligase (475 aa).

Residue 130-136 participates in ATP binding; the sequence is GTNGKTT.

It belongs to the MurCDEF family.

The protein resides in the cytoplasm. It carries out the reaction UDP-N-acetyl-alpha-D-muramoyl-L-alanine + D-glutamate + ATP = UDP-N-acetyl-alpha-D-muramoyl-L-alanyl-D-glutamate + ADP + phosphate + H(+). It functions in the pathway cell wall biogenesis; peptidoglycan biosynthesis. Functionally, cell wall formation. Catalyzes the addition of glutamate to the nucleotide precursor UDP-N-acetylmuramoyl-L-alanine (UMA). In Corynebacterium diphtheriae (strain ATCC 700971 / NCTC 13129 / Biotype gravis), this protein is UDP-N-acetylmuramoylalanine--D-glutamate ligase.